The primary structure comprises 111 residues: Cell cycle protein GpsB (111 aa).

The stretch at 34 to 72 (LDMIIKDYEVFHKELEQLQQQNARLKRELEEQKLAAAQA) forms a coiled coil.

This sequence belongs to the GpsB family. As to quaternary structure, forms polymers through the coiled coil domains. Interacts with PBP1, MreC and EzrA.

It is found in the cytoplasm. Functionally, divisome component that associates with the complex late in its assembly, after the Z-ring is formed, and is dependent on DivIC and PBP2B for its recruitment to the divisome. Together with EzrA, is a key component of the system that regulates PBP1 localization during cell cycle progression. Its main role could be the removal of PBP1 from the cell pole after pole maturation is completed. Also contributes to the recruitment of PBP1 to the division complex. Not essential for septum formation. This is Cell cycle protein GpsB from Bacillus cytotoxicus (strain DSM 22905 / CIP 110041 / 391-98 / NVH 391-98).